Here is a 173-residue protein sequence, read N- to C-terminus: Crossover junction endodeoxyribonuclease RuvC (173 aa).

Active-site residues include Asp-8, Glu-67, and Asp-139. 3 residues coordinate Mg(2+): Asp-8, Glu-67, and Asp-139.

The protein belongs to the RuvC family. As to quaternary structure, homodimer which binds Holliday junction (HJ) DNA. The HJ becomes 2-fold symmetrical on binding to RuvC with unstacked arms; it has a different conformation from HJ DNA in complex with RuvA. In the full resolvosome a probable DNA-RuvA(4)-RuvB(12)-RuvC(2) complex forms which resolves the HJ. Requires Mg(2+) as cofactor.

It localises to the cytoplasm. It carries out the reaction Endonucleolytic cleavage at a junction such as a reciprocal single-stranded crossover between two homologous DNA duplexes (Holliday junction).. Its function is as follows. The RuvA-RuvB-RuvC complex processes Holliday junction (HJ) DNA during genetic recombination and DNA repair. Endonuclease that resolves HJ intermediates. Cleaves cruciform DNA by making single-stranded nicks across the HJ at symmetrical positions within the homologous arms, yielding a 5'-phosphate and a 3'-hydroxyl group; requires a central core of homology in the junction. The consensus cleavage sequence is 5'-(A/T)TT(C/G)-3'. Cleavage occurs on the 3'-side of the TT dinucleotide at the point of strand exchange. HJ branch migration catalyzed by RuvA-RuvB allows RuvC to scan DNA until it finds its consensus sequence, where it cleaves and resolves the cruciform DNA. The sequence is that of Crossover junction endodeoxyribonuclease RuvC from Pseudoalteromonas atlantica (strain T6c / ATCC BAA-1087).